We begin with the raw amino-acid sequence, 197 residues long: Translation machinery-associated protein 22 (197 aa).

One can recognise an SUI1 domain in the interval 103–174; the sequence is IRIKRVERNK…DVREFLIKNY (72 aa).

The protein belongs to the DENR family. In terms of assembly, interacts with the 40S ribosomal subunit.

It is found in the cytoplasm. The protein is Translation machinery-associated protein 22 (tma22) of Botryotinia fuckeliana (strain B05.10) (Noble rot fungus).